We begin with the raw amino-acid sequence, 432 residues long: Transcription factor E2F1 (432 aa).

Disordered stretches follow at residues D39–P85 and Y98–Y126. Positions A65–F106 are cyclin A:CDK2 binding. Positions K87–L189 are interaction with BIRC2/c-IAP1. A DNA-binding region spans residues G108–R192. N6-acetyllysine occurs at positions 115, 118, and 123. Residues L151–L172 form a leucine-zipper region. The DEF box motif lies at E156–R192. N6-methyllysine; by SETD7 is present on K183. The tract at residues G190–S377 is required for interaction with TRIM28. The dimerization stretch occupies residues T193–I282. The disordered stretch occupies residues P297–S342. Residues P363 to F432 are transactivation. Phosphoserine occurs at positions 370 and 398. The tract at residues V404 to D421 is RB1 binding. T428 is modified (phosphothreonine).

The protein belongs to the E2F/DP family. In terms of assembly, component of the DRTF1/E2F transcription factor complex. Forms heterodimers with DP family members. The E2F1 complex binds specifically hypophosphorylated RB1, the interaction represses E2F1-driven transcription. During the cell cycle, RB1 becomes phosphorylated in mid-to-late G1 phase, detaches from the DRTF1/E2F complex, rendering E2F transcriptionally active. Interacts with TRRAP, which probably mediates its interaction with histone acetyltransferase complexes, leading to transcription activation. Binds TOPBP1 and EAPP. Interacts with ARID3A. Interacts with TRIM28; the interaction inhibits E2F1 acetylation through recruiting HDAC1 and represses its transcriptional activity. Interaction with KAT2B; the interaction acetylates E2F1 enhancing its DNA-binding and transcriptional activity. Interacts with BIRC2/c-IAP1 (via BIR domains). The complex TFDP1:E2F1 interacts with CEBPA; the interaction prevents CEBPA binding to target genes promoters and represses its transcriptional activity. Interacts with RRP1B. Interacts with HCFC1. Interacts with KMT2E; the interaction is probably indirect and is mediated via HCFC1. Interacts with DCAF5 and L3MBTL3; the interaction requires methylation at Lys-183 and is necessary to target E2F1 for ubiquitination by the CRL4-DCAF5 E3 ubiquitin ligase complex. Post-translationally, phosphorylated by CDK2 and cyclin A-CDK2 in the S-phase. Phosphorylation by CHEK2 stabilizes E2F1 upon DNA damage and regulates its effect on transcription and apoptosis. Phosphorylation at Ser-398 by GSK3B promotes interaction with USP11, leading to its deubiquitination and stabilization. Ubiquitinated via 'Lys-63'-linked ubiquitin, leading to its degradation. Deubiquitinated by USP11 following phosphorylation by GSK3B, promoting its stability. In terms of processing, acetylation stimulates DNA-binding. Enhanced under stress conditions such as DNA damage and inhibited by retinoblastoma protein RB1. Regulated by KAP1/TRIM28 which recruits HDAC1 to E2F1 resulting in deacetylation. Post-translationally, methylation at Lys-183 by SETD7 promotes E2F1 ubiquitin-dependent proteasomal degradation.

It localises to the nucleus. Its activity is regulated as follows. BIRC2/c-IAP1 stimulates its transcriptional activity. Its function is as follows. Transcription activator that binds DNA cooperatively with DP proteins through the E2 recognition site, 5'-TTTC[CG]CGC-3' found in the promoter region of a number of genes whose products are involved in cell cycle regulation or in DNA replication. The DRTF1/E2F complex functions in the control of cell-cycle progression from G1 to S phase. E2F1 binds preferentially RB1 in a cell-cycle dependent manner. It can mediate both cell proliferation and TP53/p53-dependent apoptosis. Blocks adipocyte differentiation by binding to specific promoters repressing CEBPA binding to its target gene promoters. Directly activates transcription of PEG10. Positively regulates transcription of RRP1B. In Rattus norvegicus (Rat), this protein is Transcription factor E2F1.